The following is a 183-amino-acid chain: Ribonuclease H (183 aa).

In terms of domain architecture, RNase H type-1 spans 2 to 151 (SQARFIAFSD…VDQLAQAAAR (150 aa)). Residues Asp-11, Glu-57, Asp-79, and Asp-143 each contribute to the Mg(2+) site.

This sequence belongs to the RNase H family. As to quaternary structure, monomer. Mg(2+) serves as cofactor.

The protein resides in the cytoplasm. It carries out the reaction Endonucleolytic cleavage to 5'-phosphomonoester.. Functionally, endonuclease that specifically degrades the RNA of RNA-DNA hybrids. This is Ribonuclease H from Anaeromyxobacter dehalogenans (strain 2CP-1 / ATCC BAA-258).